An 89-amino-acid chain; its full sequence is Small ribosomal subunit protein uS17 (89 aa).

This sequence belongs to the universal ribosomal protein uS17 family. As to quaternary structure, part of the 30S ribosomal subunit.

One of the primary rRNA binding proteins, it binds specifically to the 5'-end of 16S ribosomal RNA. This is Small ribosomal subunit protein uS17 from Xanthomonas campestris pv. campestris (strain B100).